We begin with the raw amino-acid sequence, 130 residues long: Acidic phospholipase A2 daboiatoxin B chain (130 aa).

A signal peptide spans 1–8 (MCLIGVEG). Disulfide bonds link Cys34-Cys123, Cys36-Cys52, Cys51-Cys103, Cys57-Cys130, Cys58-Cys96, Cys65-Cys89, and Cys83-Cys94. Ca(2+) is bound by residues Tyr35, Gly37, and Gly39. His55 is a catalytic residue. Asp56 contacts Ca(2+). The active site involves Asp97.

It belongs to the phospholipase A2 family. Group II subfamily. D49 sub-subfamily. In terms of assembly, heterodimer of an acidic protein having phospholipase A2 activity (B chain) and an A chain which weakly inhibits the B chain enzymatic activity but potentiates its lethal potency. Requires Ca(2+) as cofactor. In terms of tissue distribution, expressed by the venom gland.

The protein resides in the secreted. It carries out the reaction a 1,2-diacyl-sn-glycero-3-phosphocholine + H2O = a 1-acyl-sn-glycero-3-phosphocholine + a fatty acid + H(+). Its function is as follows. Monomer: Snake venom phospholipase A2 (PLA2) that shows a high PLA2 activity (2110 umol/min/mg). In terms of biological role, heterodimer (A and B chains): snake venom phospholipase A2 that shows a moderate PLA2 activity (1377 umol/min/mg). Acts as a presynaptic neurotoxin. In vivo, induces edema and produces neurotoxic symptoms in mice. It exhibits indirect hemolysis and a strong myonecrotic activity and is cytotoxic. PLA2 catalyzes the calcium-dependent hydrolysis of the 2-acyl groups in 3-sn-phosphoglycerides. The chain is Acidic phospholipase A2 daboiatoxin B chain from Daboia siamensis (Eastern Russel's viper).